Consider the following 1693-residue polypeptide: Non-structural polyprotein pORF1 (1693 aa).

Residues 56-240 enclose the Alphavirus-like MT domain; sequence VFRPEVFWNH…HDVSNLRSWI (185 aa). Residues 60–240 are methyltransferase; sequence EVFWNHPIQR…HDVSNLRSWI (181 aa). The Y-domain stretch occupies residues 241-439; it reads RTTKVTGDHP…FYAQCRRWLS (199 aa). The cysteines at positions 434 and 481 are disulfide-linked. The interval 442–509 is putative protease; the sequence is FHLDPRVLVF…EAYEGSDVDP (68 aa). The segment at 510–691 is zinc-binding; it reads AESAISDISG…FSPGHVWESA (182 aa). Residues histidine 671, glutamate 673, and histidine 686 each contribute to the Zn(2+) site. The interval 712 to 778 is hinge; the sequence is SSPARPDLGF…AITHQTARHR (67 aa). Residues 732-768 are disordered; that stretch reads ATPTLAAPLPPPAPDPSPPPSAPALAEPASGATAGAP. The span at 739-753 shows a compositional bias: pro residues; sequence PLPPPAPDPSPPPSA. Over residues 754–768 the composition is skewed to low complexity; it reads PALAEPASGATAGAP. Residues 775 to 921 form the Macro domain; it reads ARHRRLLFTY…LYLPELAARW (147 aa). Positions 785–942 are X-domain; the sequence is PDGSKVFAGS…TITEDVARTA (158 aa). A (+)RNA virus helicase ATP-binding domain is found at 934–1082; sequence ITEDVARTAN…RPDLGPTSWW (149 aa). Residues 960 to 1204 are NTPase/helicase; that stretch reads GCRVTPGVVQ…ISDAIVNNFF (245 aa). 975-982 serves as a coordination point for ATP; it reads GVPGSGKS. Positions 1083-1216 constitute a (+)RNA virus helicase C-terminal domain; the sequence is HVTHRWPADV…GGEIGHQRPS (134 aa). The segment at 1207–1693 is RNA-directed RNA polymerase; it reads GGEIGHQRPS…LTNSILCRVE (487 aa). The region spanning 1454 to 1565 is the RdRp catalytic domain; sequence SMVFENDFSE…LCSEYRQSPG (112 aa).

The protein belongs to the hepevirus non-structural polyprotein family. In terms of assembly, the protease domain interacts with host EIF2AK4 (via C-terminus); this interaction inhibits dimerization of EIF2AK4 and prevents EIF2AK4-mediated phosphorylation of host EIF2A. Mg(2+) is required as a cofactor. Post-translationally, ORF1 polyprotein does not seem to be processed into distinct enzymatic domains by a viral protease belonging to ORF1, but could be processed by a host serine protease like thrombin.

The protein resides in the host cytoplasm. Its subcellular location is the host perinuclear region. It catalyses the reaction RNA(n) + a ribonucleoside 5'-triphosphate = RNA(n+1) + diphosphate. The enzyme catalyses GTP + S-adenosyl-L-methionine = N(7)-methyl-GTP + S-adenosyl-L-homocysteine. With respect to regulation, putative protease: Inhibited by chymostatin. Its function is as follows. Methyltransferase: Displays a capping enzyme activity. This function is necessary since all viral RNAs are synthesized in the cytoplasm, and host capping enzymes are restricted to the nucleus. The enzymatic reaction involves a covalent link between 7-methyl-GMP and the methyltransferase, whereas eukaryotic capping enzymes form a covalent complex only with GMP. Methyltransferase catalyzes transfer of a methyl group from S-adenosylmethionine to GTP and GDP to yield m(7)GTP or m(7)GDP. GDP is a better substrate than GTP. This enzyme also displays guanylyltransferase activity to form a covalent complex, methyltransferase-m(7)GMP, from which 7-methyl-GMP is transferred to the mRNA to create the cap structure. Functionally, Y-domain: Indispensable for virus replication. Putative protease: The putative protease domain although necessary for replication of the virus may not be a protease but rather a structural Zn(2+)-binding domain. Inhibits induction of IFN-beta by MDA5 and RIG-I pathways and down-regulates the expression of MDA5. In terms of biological role, NTPase/helicase: Multi-functional protein that exhibits NTPase and RNA unwinding activities. Hydrolyzes all NTPs efficiently and unwinds RNA duplexes containing 5' overhangs. Possesses a sequence independent RNA-5'-triphosphatase (RTPase) activity suggestive of its role in forming viral cap structure. Also participates in viral genome replication, RNA translocation and genome packaging/unpackaging. Its function is as follows. RNA-directed RNA polymerase: Plays an essential role in the virus replication. Binds to the 3'-end of the genomic RNA to initiate viral replication. The polypeptide is Non-structural polyprotein pORF1 (Homo sapiens (Human)).